A 588-amino-acid chain; its full sequence is Methylcrotonoyl-CoA carboxylase beta chain, mitochondrial (588 aa).

The 258-residue stretch at 72 to 329 (MNSTLKQLKE…KKQPSPVITE (258 aa)) folds into the CoA carboxyltransferase N-terminal domain. A carboxyltransferase region spans residues 72–570 (MNSTLKQLKE…RKVIALSLSA (499 aa)). The CoA carboxyltransferase C-terminal domain maps to 329–570 (ETEEPLYPTS…RKVIALSLSA (242 aa)). The tract at residues 366-395 (RFDEFKELYGTTLICGFARVHGMPVGIIAN) is acyl-CoA binding.

This sequence belongs to the AccD/PCCB family. As to quaternary structure, probably a dodecamer composed of six biotin-containing alpha subunits and six beta subunits.

Its subcellular location is the mitochondrion matrix. It carries out the reaction 3-methylbut-2-enoyl-CoA + hydrogencarbonate + ATP = 3-methyl-(2E)-glutaconyl-CoA + ADP + phosphate + H(+). It participates in amino-acid degradation; L-leucine degradation; (S)-3-hydroxy-3-methylglutaryl-CoA from 3-isovaleryl-CoA: step 2/3. Carboxyltransferase subunit of the 3-methylcrotonyl-CoA carboxylase, an enzyme that catalyzes the conversion of 3-methylcrotonyl-CoA to 3-methylglutaconyl-CoA, a critical step for leucine and isovaleric acid catabolism. This chain is Methylcrotonoyl-CoA carboxylase beta chain, mitochondrial (mccb), found in Dictyostelium discoideum (Social amoeba).